Consider the following 1034-residue polypeptide: Mediator of RNA polymerase II transcription subunit 15 (1034 aa).

7 stretches are compositionally biased toward low complexity: residues Gln101–Ala123, Gln138–Gln149, Gln157–Leu183, Met281–His312, Gln413–Gln441, Pro459–Gln490, and Gln655–Ile675. Disordered regions lie at residues Gln101–Asn124, Gln138–Leu183, Met281–Pro315, Gln413–Arg497, Gln655–Ser682, Ser712–Lys804, and Ile951–Asp1020. 2 stretches are compositionally biased toward polar residues: residues Asn738–Pro764 and Pro772–Pro802. A compositionally biased stretch (basic and acidic residues) spans Ser962–Ser971. Residues Ser998 to Asp1020 are compositionally biased toward polar residues.

The protein belongs to the Mediator complex subunit 15 family. In terms of assembly, component of the Mediator complex.

It is found in the nucleus. Component of the Mediator complex, a coactivator involved in the regulated transcription of nearly all RNA polymerase II-dependent genes. Mediator functions as a bridge to convey information from gene-specific regulatory proteins to the basal RNA polymerase II transcription machinery. Mediator is recruited to promoters by direct interactions with regulatory proteins and serves as a scaffold for the assembly of a functional preinitiation complex with RNA polymerase II and the general transcription factors. Required for transcription of genes encoding galactose-metabolizing enzymes. Essential for normal growth on nonfermentable carbon sources, for sporulation and mating. This is Mediator of RNA polymerase II transcription subunit 15 (GAL11) from Kluyveromyces lactis (strain ATCC 8585 / CBS 2359 / DSM 70799 / NBRC 1267 / NRRL Y-1140 / WM37) (Yeast).